The chain runs to 94 residues: Progonadoliberin-3 (94 aa).

The N-terminal stretch at 1-23 is a signal peptide; the sequence is MEWKGRVLVQLLMLVCVLEVSLC. A Pyrrolidone carboxylic acid modification is found at Q24. G33 bears the Glycine amide mark.

It belongs to the GnRH family.

The protein resides in the secreted. Its function is as follows. Stimulates the secretion of gonadotropins. This Rutilus rutilus (Roach) protein is Progonadoliberin-3 (gnrh3).